Here is a 452-residue protein sequence, read N- to C-terminus: Sulfide:quinone oxidoreductase, mitochondrial (452 aa).

FAD-binding positions include 54 to 55, E77, Q85, and V120; that span reads AG. C204 serves as the catalytic Cysteine persulfide intermediate. The cysteines at positions 204 and 380 are disulfide-linked. FAD contacts are provided by residues D337 and 345–348; that span reads KTAA. C380 acts as the Cysteine persulfide intermediate in catalysis.

It belongs to the SQRD family. FAD serves as cofactor.

The protein localises to the mitochondrion. It carries out the reaction ubiquinone-10 + hydrogen sulfide + sulfite + 2 H(+) = ubiquinol-10 + thiosulfate. The catalysed reaction is a quinone + hydrogen sulfide + glutathione + H(+) = S-sulfanylglutathione + a quinol. Functionally, catalyzes the oxidation of hydrogen sulfide, with the help of a quinone. This Dictyostelium discoideum (Social amoeba) protein is Sulfide:quinone oxidoreductase, mitochondrial.